The chain runs to 410 residues: Histidine--tRNA ligase (410 aa).

Belongs to the class-II aminoacyl-tRNA synthetase family. Homodimer.

It is found in the cytoplasm. It catalyses the reaction tRNA(His) + L-histidine + ATP = L-histidyl-tRNA(His) + AMP + diphosphate + H(+). The sequence is that of Histidine--tRNA ligase from Campylobacter hominis (strain ATCC BAA-381 / DSM 21671 / CCUG 45161 / LMG 19568 / NCTC 13146 / CH001A).